Reading from the N-terminus, the 232-residue chain is Orotidine 5'-phosphate decarboxylase (232 aa).

Residues D13, K35, 62–71 (DLKFHDIPNT), T122, R182, Q191, G211, and R212 each bind substrate. The Proton donor role is filled by K64.

This sequence belongs to the OMP decarboxylase family. Type 1 subfamily. Homodimer.

It carries out the reaction orotidine 5'-phosphate + H(+) = UMP + CO2. It participates in pyrimidine metabolism; UMP biosynthesis via de novo pathway; UMP from orotate: step 2/2. Functionally, catalyzes the decarboxylation of orotidine 5'-monophosphate (OMP) to uridine 5'-monophosphate (UMP). In Pseudomonas syringae pv. tomato (strain ATCC BAA-871 / DC3000), this protein is Orotidine 5'-phosphate decarboxylase.